Reading from the N-terminus, the 359-residue chain is GTP 3',8-cyclase (359 aa).

One can recognise a Radical SAM core domain in the interval Arg33–Pro260. Position 42 (Arg42) interacts with GTP. [4Fe-4S] cluster-binding residues include Cys49 and Cys53. Tyr55 contributes to the S-adenosyl-L-methionine binding site. Cys56 contributes to the [4Fe-4S] cluster binding site. Residue Arg93 coordinates GTP. Residue Gly97 participates in S-adenosyl-L-methionine binding. Thr124 contributes to the GTP binding site. Ser148 contacts S-adenosyl-L-methionine. Position 185 (Lys185) interacts with GTP. Residue Met219 coordinates S-adenosyl-L-methionine. Positions 286 and 289 each coordinate [4Fe-4S] cluster. Arg291–Arg293 contributes to the GTP binding site. Cys303 provides a ligand contact to [4Fe-4S] cluster.

Belongs to the radical SAM superfamily. MoaA family. In terms of assembly, monomer and homodimer. [4Fe-4S] cluster serves as cofactor.

The catalysed reaction is GTP + AH2 + S-adenosyl-L-methionine = (8S)-3',8-cyclo-7,8-dihydroguanosine 5'-triphosphate + 5'-deoxyadenosine + L-methionine + A + H(+). It functions in the pathway cofactor biosynthesis; molybdopterin biosynthesis. Functionally, catalyzes the cyclization of GTP to (8S)-3',8-cyclo-7,8-dihydroguanosine 5'-triphosphate. This chain is GTP 3',8-cyclase, found in Rhodopirellula baltica (strain DSM 10527 / NCIMB 13988 / SH1).